A 233-amino-acid chain; its full sequence is Small ribosomal subunit protein uS5 (233 aa).

Over residues 1 to 13 the composition is skewed to polar residues; that stretch reads MAEETQNTVATES. The interval 1-40 is disordered; the sequence is MAEETQNTVATESNNEDRKGRRGQRGEGRRGERRNRREEN. The span at 15 to 40 shows a compositional bias: basic and acidic residues; sequence NEDRKGRRGQRGEGRRGERRNRREEN. An S5 DRBM domain is found at 45-108; the sequence is LLDRVVTINR…LDAKKHMFSV (64 aa).

It belongs to the universal ribosomal protein uS5 family. As to quaternary structure, part of the 30S ribosomal subunit. Contacts proteins S4 and S8.

Functionally, with S4 and S12 plays an important role in translational accuracy. In terms of biological role, located at the back of the 30S subunit body where it stabilizes the conformation of the head with respect to the body. The sequence is that of Small ribosomal subunit protein uS5 from Bifidobacterium longum (strain NCC 2705).